Here is a 127-residue protein sequence, read N- to C-terminus: MKLTIIRLEKFSDQDRIDLQKIWPEYSPSSLQVDDNHRIYAARFNERLLAAVRVTLSGTEGALDSLRVREVTRRRGVGQYLLEEVLRNNPGVSCWWMADAGVEDRGVMTAFMQALGFTAQQGGWEKC.

In terms of domain architecture, N-acetyltransferase spans 1–127 (MKLTIIRLEK…TAQQGGWEKC (127 aa)). Interaction with PanD regions lie at residues 43-48 (RFNERL) and 66-76 (LRVREVTRRRG). CoA contacts are provided by residues 66-68 (LRV) and 72-79 (TRRRGVGQ).

The protein belongs to the PanZ/PanM family. As to quaternary structure, interacts with PanD in the presence of CoA. Forms a heterooctameric complex composed of four PanD subunits and four PanZ subunits. Monomer in solution.

Activation of PanD processing occurs even at low CoA concentrations. In contrast, full inhibition of PanD catalytic activity only occurs at sufficiently high CoA concentrations. Functionally, controls both the activation and catalytic activity of PanD in a coenzyme A (CoA)-dependent fashion. Binding of CoA or a derivative to PanZ leads to interaction with PanD, which promotes the processing and activation of pro-PanD, and subsequent substrate-mediated inhibition of the active form of PanD. Inhibition of PanD activity is probably the primary metabolic role of PanZ, allowing negative feedback regulation of pantothenate biosynthesis by CoA. This chain is PanD regulatory factor, found in Escherichia coli (strain K12).